The primary structure comprises 222 residues: DnaJ homolog subfamily B member 9 (222 aa).

An N-terminal signal peptide occupies residues 1 to 23 (MATPQSVFVFAICILMITELILA). A J domain is found at 26 to 90 (SYYDILGVPK…HRRKEYDTVG (65 aa)). Residues 91–222 (HTAFTNGKGQ…VTTYTDCSGQ (132 aa)) form a divergent targeting domain region. Position 133 is a phosphoserine (serine 133).

Interacts with HSPA5/BiP; interaction is direct. Interacts with ERN1/IRE1 (via the luminal region). Interacts with DERL1.

The protein localises to the endoplasmic reticulum lumen. Co-chaperone for Hsp70 protein HSPA5/BiP that acts as a key repressor of the ERN1/IRE1-mediated unfolded protein response (UPR). J domain-containing co-chaperones stimulate the ATPase activity of Hsp70 proteins and are required for efficient substrate recognition by Hsp70 proteins. In the unstressed endoplasmic reticulum, interacts with the luminal region of ERN1/IRE1 and selectively recruits HSPA5/BiP: HSPA5/BiP disrupts the dimerization of the active ERN1/IRE1 luminal region, thereby inactivating ERN1/IRE1. Also involved in endoplasmic reticulum-associated degradation (ERAD) of misfolded proteins. Required for survival of B-cell progenitors and normal antibody production. This Cricetulus griseus (Chinese hamster) protein is DnaJ homolog subfamily B member 9.